The following is a 233-amino-acid chain: Antilisterial bacteriocin subtilosin biosynthesis protein AlbG (233 aa).

5 consecutive transmembrane segments (helical) span residues 4 to 24 (STVFTVLLLLLGMAAYSFGWV), 46 to 66 (GLLACIAAVLMLPAFLYLHYV), 116 to 136 (TYVMAAVLCQVIIFGCMFEIV), 145 to 165 (TPPIVSTGMALLLILYLLFYM), and 192 to 212 (IGWMLSFTISELLFLIILAAI).

The protein resides in the cell membrane. Functionally, involved in the production of the bacteriocin subtilosin. This is Antilisterial bacteriocin subtilosin biosynthesis protein AlbG (albG) from Bacillus subtilis.